We begin with the raw amino-acid sequence, 254 residues long: Casein kinase II subunit beta-2 (254 aa).

It belongs to the casein kinase 2 subunit beta family. Tetramer composed of two alpha chains, one beta chain and one beta' chain. Post-translationally, phosphorylated by alpha subunit.

Regulatory subunit of casein kinase II/CK2. As part of the kinase complex regulates the basal catalytic activity of the alpha subunit a constitutively active serine/threonine-protein kinase that phosphorylates a large number of substrates containing acidic residues C-terminal to the phosphorylated serine or threonine. This chain is Casein kinase II subunit beta-2, found in Schizosaccharomyces pombe (strain 972 / ATCC 24843) (Fission yeast).